The chain runs to 266 residues: Metallo-beta-lactamase VIM-2 (266 aa).

The first 20 residues, 1–20 (MFKLLSKLLVYLTASIMAIA), serve as a signal peptide directing secretion. 3 residues coordinate Zn(2+): His-114, His-116, and Cys-198.

This sequence belongs to the metallo-beta-lactamase superfamily. Class-B beta-lactamase family. As to quaternary structure, monomer. Requires Zn(2+) as cofactor.

Its subcellular location is the periplasm. It catalyses the reaction a beta-lactam + H2O = a substituted beta-amino acid. Its activity is regulated as follows. Inhibited by chelating agents such as EDTA. Inhibited by a fungal natural product, aspergillomarasmine A (AMA). Inhibited by 2-triazolylthioacetamides. Functionally, class B beta-lactamase which confers resistance to the beta-lactam antibiotics, including penicillins, cephalosporins and carbapenems. Acts via hydrolysis of the beta-lactam ring. Has penicillin-, cephalosporin- and carbapenem-hydrolyzing activities. The polypeptide is Metallo-beta-lactamase VIM-2 (Escherichia coli).